Reading from the N-terminus, the 318-residue chain is Ubiquitin-like domain-containing CTD phosphatase 1 (318 aa).

An N-acetylalanine modification is found at Ala2. Residues 3–81 (LPIIVKWGGQ…IMMMGTREES (79 aa)) enclose the Ubiquitin-like domain. At Lys117 the chain carries N6-acetyllysine. The region spanning 133 to 294 (PREGKKLLVL…LKLTQYLKEI (162 aa)) is the FCP1 homology domain. Mg(2+)-binding residues include Asp143, Asp145, and Asp253.

Requires Mg(2+) as cofactor.

The protein resides in the nucleus. The catalysed reaction is O-phospho-L-seryl-[protein] + H2O = L-seryl-[protein] + phosphate. It carries out the reaction O-phospho-L-threonyl-[protein] + H2O = L-threonyl-[protein] + phosphate. Functionally, dephosphorylates 26S nuclear proteasomes, thereby decreasing their proteolytic activity. Recruited to the 19S regulatory particle of the 26S proteasome through its interaction with 19S component PSMD2/RPN1. Once recruited, dephosphorylates 19S component PSMC2/RPT1 which impairs PSMC2 ATPase activity and disrupts 26S proteasome assembly. Has also been reported to stimulate the proteolytic activity of the 26S proteasome. The sequence is that of Ubiquitin-like domain-containing CTD phosphatase 1 (UBLCP1) from Bos taurus (Bovine).